The sequence spans 448 residues: Ribulose bisphosphate carboxylase large chain (448 aa).

The propeptide occupies Met-1–Ser-2. Position 3 is an N-acetylproline (Pro-3). At Lys-14 the chain carries N6,N6,N6-trimethyllysine. Substrate-binding residues include Asn-122 and Thr-172. Lys-174 acts as the Proton acceptor in catalysis. Lys-176 lines the substrate pocket. Lys-200, Asp-202, and Glu-203 together coordinate Mg(2+). The residue at position 200 (Lys-200) is an N6-carboxylysine. His-293 functions as the Proton acceptor in the catalytic mechanism. Substrate is bound by residues Arg-294, His-326, and Ser-378.

This sequence belongs to the RuBisCO large chain family. Type I subfamily. Heterohexadecamer of 8 large chains and 8 small chains; disulfide-linked. The disulfide link is formed within the large subunit homodimers. Mg(2+) serves as cofactor. The disulfide bond which can form in the large chain dimeric partners within the hexadecamer appears to be associated with oxidative stress and protein turnover.

The protein resides in the plastid. The protein localises to the chloroplast. The catalysed reaction is 2 (2R)-3-phosphoglycerate + 2 H(+) = D-ribulose 1,5-bisphosphate + CO2 + H2O. The enzyme catalyses D-ribulose 1,5-bisphosphate + O2 = 2-phosphoglycolate + (2R)-3-phosphoglycerate + 2 H(+). In terms of biological role, ruBisCO catalyzes two reactions: the carboxylation of D-ribulose 1,5-bisphosphate, the primary event in carbon dioxide fixation, as well as the oxidative fragmentation of the pentose substrate in the photorespiration process. Both reactions occur simultaneously and in competition at the same active site. The sequence is that of Ribulose bisphosphate carboxylase large chain from Dichapetalum crassifolium.